The sequence spans 84 residues: Alpha-mammal toxin Ts2 (84 aa).

An N-terminal signal peptide occupies residues 1–20; the sequence is MKGFLLFISILMMIGTIVVG. In terms of domain architecture, LCN-type CS-alpha/beta spans 21–83; it reads KEGYAMDHEG…VWDYATNKCG (63 aa). Cystine bridges form between Cys31/Cys82, Cys35/Cys58, Cys43/Cys63, and Cys47/Cys65. Cys82 carries the post-translational modification Cysteine amide.

This sequence belongs to the long (4 C-C) scorpion toxin superfamily. Sodium channel inhibitor family. Beta subfamily. As to expression, expressed by the venom gland.

It is found in the secreted. Functionally, alpha toxins bind voltage-independently at site-3 of sodium channels (Nav) and inhibit the inactivation of the activated channels, thereby blocking neuronal transmission. This toxin acts on Nav1.2/SCN2A, Nav1.3/SCN3A, Nav1.5/SCN5A, Nav1.6/SCN8A and Nav1.7/SCN9A voltage-gated sodium channels, with the highest affinity for Nav1.3/SCN3A, followed by Nav1.6/SCN8A and Nav1.7/SCN9A which are affected almost equally. Interestingly, shows a significant shift of the voltage dependence of activation for Nav1.3/SCN3A that is characteristic of beta-toxins. In addition, in presence of LPS, this toxin inhibits the release of NO, IL-6 and TNF-alpha in J774.1 cells. Further, in the absence of LPS, it stimulates the production of the anti-inflammatory cytokine IL-10. This toxin is active on mammals. The sequence is that of Alpha-mammal toxin Ts2 from Tityus serrulatus (Brazilian scorpion).